The chain runs to 377 residues: Homoserine O-succinyltransferase (377 aa).

One can recognise an AB hydrolase-1 domain in the interval 50–359 (NAVLVCHALS…SSHGHDSFLM (310 aa)). Residue Ser-156 is the Nucleophile of the active site. A substrate-binding site is contributed by Arg-226. Active-site residues include Asp-321 and His-354. Asp-355 is a substrate binding site.

It belongs to the AB hydrolase superfamily. MetX family. As to quaternary structure, homodimer.

The protein resides in the cytoplasm. The enzyme catalyses L-homoserine + succinyl-CoA = O-succinyl-L-homoserine + CoA. Its pathway is amino-acid biosynthesis; L-methionine biosynthesis via de novo pathway; O-succinyl-L-homoserine from L-homoserine: step 1/1. Transfers a succinyl group from succinyl-CoA to L-homoserine, forming succinyl-L-homoserine. The chain is Homoserine O-succinyltransferase from Nitrosospira multiformis (strain ATCC 25196 / NCIMB 11849 / C 71).